A 305-amino-acid chain; its full sequence is Ribonuclease Z (305 aa).

Positions 61, 63, 65, 66, 138, 208, and 266 each coordinate Zn(2+). Residue D65 is the Proton acceptor of the active site.

Belongs to the RNase Z family. Homodimer. Zn(2+) is required as a cofactor.

The enzyme catalyses Endonucleolytic cleavage of RNA, removing extra 3' nucleotides from tRNA precursor, generating 3' termini of tRNAs. A 3'-hydroxy group is left at the tRNA terminus and a 5'-phosphoryl group is left at the trailer molecule.. Zinc phosphodiesterase, which displays some tRNA 3'-processing endonuclease activity. Probably involved in tRNA maturation, by removing a 3'-trailer from precursor tRNA. This chain is Ribonuclease Z, found in Methanosarcina mazei (strain ATCC BAA-159 / DSM 3647 / Goe1 / Go1 / JCM 11833 / OCM 88) (Methanosarcina frisia).